Here is a 443-residue protein sequence, read N- to C-terminus: Putative F-box/FBD/LRR-repeat protein At3g49030 (443 aa).

The F-box domain occupies 20 to 68 (EDRISELPEDLLLQILSDIPTENVIATSVLSKRWRSLWKMVPNLTFDFT). LRR repeat units follow at residues 74–100 (HQTF…QLNF), 152–179 (ILEI…RLYE), 180–205 (VHFK…SVHR), 218–252 (VPSL…NIVG), 272–297 (ISDV…SLES), and 320–345 (KERE…KLTG). The FBD domain occupies 357–408 (NWNPPKCVPECLLFHLEKFLWTGYEWQRGDEKEVATYILENARLLKKATFST).

In Arabidopsis thaliana (Mouse-ear cress), this protein is Putative F-box/FBD/LRR-repeat protein At3g49030.